Reading from the N-terminus, the 417-residue chain is MKETIYKQLEKVREASRKLCTLSDSDINSLLNDLANRIPGNSQTILEANQKDLDRMDPNDPKYDRLLLSTSRLESIASDIRNVAELPTPVGRILEKRTLPNGLALKKTTVPLGVVGIIYESRPNVTFDVFALCLKSGNATVLKGGSDAMYSNMAIVDLIREVLVRNNVNPDTLYLLPSDREAAGIMLNAVGYIDVIIPRGSQQLIDFARKSSSVPVIETGAGIVHTYFDLSGDLQMGKEIVFNAKTRRPSVCNALDTLLIHRERLDDLASIAEPLAEKKVIIFADKDAYPALLSRYPSELLQKAEEKHFGTEFLSLKMSVKTVDSLEDALKHIARFSSMHSEAVIASDAVVKDEFLKRVDAAVVYANTSTAFTDGAQFGLGAEIGISTQKLHARGPMALQELTSYKWVIEGDGQTRA.

Belongs to the gamma-glutamyl phosphate reductase family.

The protein localises to the cytoplasm. It carries out the reaction L-glutamate 5-semialdehyde + phosphate + NADP(+) = L-glutamyl 5-phosphate + NADPH + H(+). Its pathway is amino-acid biosynthesis; L-proline biosynthesis; L-glutamate 5-semialdehyde from L-glutamate: step 2/2. In terms of biological role, catalyzes the NADPH-dependent reduction of L-glutamate 5-phosphate into L-glutamate 5-semialdehyde and phosphate. The product spontaneously undergoes cyclization to form 1-pyrroline-5-carboxylate. The sequence is that of Gamma-glutamyl phosphate reductase from Chlorobium phaeobacteroides (strain BS1).